Here is a 144-residue protein sequence, read N- to C-terminus: Ribonuclease H (144 aa).

The RNase H type-1 domain occupies 1 to 136 (MKIVTLFSDG…CDQMARNEAL (136 aa)). Residues Asp9, Glu47, Asp69, and Asp128 each coordinate Mg(2+).

This sequence belongs to the RNase H family. Monomer. Requires Mg(2+) as cofactor.

It is found in the cytoplasm. It catalyses the reaction Endonucleolytic cleavage to 5'-phosphomonoester.. Endonuclease that specifically degrades the RNA of RNA-DNA hybrids. The protein is Ribonuclease H of Campylobacter concisus (strain 13826).